We begin with the raw amino-acid sequence, 504 residues long: Histidine ammonia-lyase (504 aa).

The segment at residues 142-144 (ASG) is a cross-link (5-imidazolinone (Ala-Gly)). The residue at position 143 (serine 143) is a 2,3-didehydroalanine (Ser).

This sequence belongs to the PAL/histidase family. Post-translationally, contains an active site 4-methylidene-imidazol-5-one (MIO), which is formed autocatalytically by cyclization and dehydration of residues Ala-Ser-Gly.

Its subcellular location is the cytoplasm. It carries out the reaction L-histidine = trans-urocanate + NH4(+). Its pathway is amino-acid degradation; L-histidine degradation into L-glutamate; N-formimidoyl-L-glutamate from L-histidine: step 1/3. This is Histidine ammonia-lyase from Staphylococcus aureus (strain MRSA252).